Here is a 244-residue protein sequence, read N- to C-terminus: Rho-related GTP-binding protein RhoE (244 aa).

Position 30–37 (30–37 (GDSQCGKT)) interacts with GTP. Residues 52–60 (YVPTVFENY) carry the Effector region motif. GTP-binding positions include 77 to 81 (DTSGS) and 135 to 138 (CKSD). Cys241 is modified (cysteine methyl ester). Cys241 carries S-farnesyl cysteine lipidation. The propeptide at 242–244 (TVM) is removed in mature form.

The protein belongs to the small GTPase superfamily. Rho family. In terms of assembly, binds ROCK1. Interacts with UBXD5. In terms of tissue distribution, ubiquitous.

The protein resides in the golgi apparatus membrane. In terms of biological role, binds GTP but lacks intrinsic GTPase activity and is resistant to Rho-specific GTPase-activating proteins. The chain is Rho-related GTP-binding protein RhoE (RND3) from Homo sapiens (Human).